Here is a 283-residue protein sequence, read N- to C-terminus: Peroxisome biogenesis protein 22 (283 aa).

Ala-2 is modified (N-acetylalanine). A helical transmembrane segment spans residues Ile-45–Ile-62. A disordered region spans residues Gly-66–Arg-107. Over residues Ala-81–Ala-100 the composition is skewed to low complexity.

This sequence belongs to the peroxin-22 family. In terms of assembly, interacts with PEX4.

It is found in the peroxisome membrane. In terms of biological role, may be tethered PEX4 to the peroxisome membrane and may be involved in a late step of the matrix protein import. Does not play a role in the biogenesis of the peroxisomal membrane. The protein is Peroxisome biogenesis protein 22 (PEX22) of Arabidopsis thaliana (Mouse-ear cress).